The chain runs to 400 residues: Lysophospholipid transporter LplT (400 aa).

Helical transmembrane passes span valine 19–alanine 39, valine 53–alanine 73, alanine 91–isoleucine 111, leucine 139–alanine 159, isoleucine 164–isoleucine 184, serine 195–tryptophan 213, leucine 227–leucine 247, tyrosine 257–valine 277, threonine 281–leucine 301, alanine 304–valine 324, asparagine 352–alanine 372, and valine 373–tryptophan 393.

Belongs to the major facilitator superfamily. LplT (TC 2.A.1.42) family.

Its subcellular location is the cell inner membrane. Catalyzes the facilitated diffusion of 2-acyl-glycero-3-phosphoethanolamine (2-acyl-GPE) into the cell. The chain is Lysophospholipid transporter LplT from Salmonella heidelberg (strain SL476).